The primary structure comprises 310 residues: Putative dihydroorotate dehydrogenase A (fumarate) (310 aa).

Substrate is bound by residues lysine 45, asparagine 69–leucine 73, and asparagine 128. Residue lysine 45–threonine 46 participates in FMN binding. Asparagine 128 is a binding site for FMN. Cysteine 131 functions as the Nucleophile in the catalytic mechanism. Positions 165 and 193 each coordinate FMN. Residue asparagine 194–serine 195 participates in substrate binding. Residues glycine 220, glycine 248–glycine 249, and glycine 270–threonine 271 each bind FMN.

The protein belongs to the dihydroorotate dehydrogenase family. Type 1 subfamily. In terms of assembly, homodimer. The cofactor is FMN.

It localises to the cytoplasm. The enzyme catalyses (S)-dihydroorotate + fumarate = orotate + succinate. Its pathway is pyrimidine metabolism; UMP biosynthesis via de novo pathway. Its function is as follows. Catalyzes the conversion of dihydroorotate to orotate with fumarate as the electron acceptor. This chain is Putative dihydroorotate dehydrogenase A (fumarate) (pyrD), found in Streptococcus agalactiae serotype Ia (strain ATCC 27591 / A909 / CDC SS700).